The chain runs to 342 residues: Heparan sulfate glucosamine 3-O-sulfotransferase 6 (342 aa).

Residues 1–31 (MAGSGGLGGGAGDLQGAGTGQGTALRALRAP) are Cytoplasmic-facing. The helical; Signal-anchor for type II membrane protein transmembrane segment at 32–49 (LALVVLLLSAYCLFALPG) threads the bilayer. Residues 50–342 (RCPPAARAPA…QMTGQDFGWD (293 aa)) are Lumenal-facing. The interval 56 to 75 (RAPAPVPAPAEPPHTSLRLR) is disordered. 100-104 (KGGTR) lines the 3'-phosphoadenylyl sulfate pocket. Substrate contacts are provided by residues 122–128 (EPHFFDR) and 153–156 (KTPS). Positions 181 and 189 each coordinate 3'-phosphoadenylyl sulfate. 220-221 (WS) is a substrate binding site. A glycan (N-linked (GlcNAc...) asparagine) is linked at Asn281. A disulfide bridge links Cys288 with Cys300. Residue 305 to 309 (KGRPH) coordinates 3'-phosphoadenylyl sulfate.

The protein belongs to the sulfotransferase 1 family. In terms of tissue distribution, expressed in liver and kidney, followed by heart, brain, lung and testis.

The protein localises to the golgi apparatus membrane. It catalyses the reaction alpha-D-glucosaminyl-[heparan sulfate](n) + 3'-phosphoadenylyl sulfate = 3-sulfo-alpha-D-glucosaminyl-[heparan sulfate](n) + adenosine 3',5'-bisphosphate + H(+). Functionally, sulfotransferase that utilizes 3'-phospho-5'-adenylyl sulfate (PAPS) to catalyze the transfer of a sulfo group to heparan sulfate. Unlike 3-OST-1, does not convert non-anticoagulant heparan sulfate to anticoagulant heparan sulfate. This Mus musculus (Mouse) protein is Heparan sulfate glucosamine 3-O-sulfotransferase 6 (Hs3st6).